The chain runs to 315 residues: Putative ankyrin repeat protein R600 (315 aa).

5 ANK repeats span residues 79–108, 118–152, 153–182, 184–211, and 212–240; these read NECRYFRMAVYNNSYDIAKYLLENGANVHV, SGFGKFYVFHSEKKEKRDTVELVKLLIDYNAMVGT, DTCNLVHTAIDANRLDVVKILVENGADIFS, QSKLLKSAVMYNYDILEYLISQGIDVTD, and DNNSVLKFAVSRGYDCVDLLLDAGADMNT.

This chain is Putative ankyrin repeat protein R600, found in Acanthamoeba polyphaga mimivirus (APMV).